The sequence spans 156 residues: Endoribonuclease YbeY (156 aa).

Residues His122, His126, and His132 each coordinate Zn(2+).

It belongs to the endoribonuclease YbeY family. The cofactor is Zn(2+).

Its subcellular location is the cytoplasm. Its function is as follows. Single strand-specific metallo-endoribonuclease involved in late-stage 70S ribosome quality control and in maturation of the 3' terminus of the 16S rRNA. In Symbiobacterium thermophilum (strain DSM 24528 / JCM 14929 / IAM 14863 / T), this protein is Endoribonuclease YbeY.